The primary structure comprises 1069 residues: Cellulose synthase A catalytic subunit 5 [UDP-forming] (1069 aa).

Met-1 is subject to N-acetylmethionine. At 1–265 (MNTGGRLIAG…KSSKINPYRM (265 aa)) the chain is on the cytoplasmic side. Positions 39, 42, 58, 61, 66, 69, 81, and 84 each coordinate Zn(2+). An RING-type; degenerate zinc finger spans residues 39–85 (CQICGDEIELSVDGESFVACNECAFPVCRPCYEYERREGNQSCPQCK). Phosphoserine occurs at positions 229 and 230. The helical transmembrane segment at 266-286 (LIVLRLVILGLFFHYRILHPV) threads the bilayer. At 287-288 (ND) the chain is on the extracellular side. Residues 289-309 (AYALWLISVICEIWFAVSWVL) traverse the membrane as a helical segment. Over 310-853 (DQFPKWYPIE…INSVVYPWTS (544 aa)) the chain is Cytoplasmic. 4 residues coordinate UDP-alpha-D-glucose: Ser-348, Lys-354, Glu-355, and Asp-384. Asp-384 is a catalytic residue. The stretch at 438 to 464 (VRERRAMKRDYEEFKVKINALVATAQK) forms a coiled coil. UDP-alpha-D-glucose is bound at residue Lys-525. Mn(2+) contacts are provided by Lys-526 and Asp-550. Residue Asp-770 is part of the active site. A helical membrane pass occupies residues 854 to 874 (IPLLVYCSLPAICLLTGKFIV). The Extracellular portion of the chain corresponds to 875–879 (PEISN). A helical membrane pass occupies residues 880 to 900 (YASILFMALFGSIAVTGILEM). At 901–915 (QWGKVGIDDWWRNEQ) the chain is on the cytoplasmic side. A helical transmembrane segment spans residues 916–936 (FWVIGGVSAHLFALFQGLLKV). At 937-965 (LAGVETNFTVTSKAADDGEFSELYIFKWT) the chain is on the extracellular side. N-linked (GlcNAc...) asparagine glycosylation occurs at Asn-943. A helical transmembrane segment spans residues 966–986 (SLLIPPTTLLIINVIGVIVGI). The Cytoplasmic segment spans residues 987–997 (SDAISNGYDSW). The helical transmembrane segment at 998-1018 (GPLFGRLFFAFWVILHLYPFL) threads the bilayer. At 1019 to 1027 (KGLLGKQDR) the chain is on the extracellular side. Residues 1028–1048 (MPTIILVWSILLASILTLLWV) form a helical membrane-spanning segment. Residues 1049 to 1069 (RVNPFVAKGGPILEICGLDCL) lie on the Cytoplasmic side of the membrane.

The protein belongs to the glycosyltransferase 2 family. Plant cellulose synthase subfamily. Requires Zn(2+) as cofactor. It depends on Mn(2+) as a cofactor. Expressed in young plants, stems and flowers.

The protein localises to the cell membrane. The catalysed reaction is [(1-&gt;4)-beta-D-glucosyl](n) + UDP-alpha-D-glucose = [(1-&gt;4)-beta-D-glucosyl](n+1) + UDP + H(+). Its pathway is glycan metabolism; plant cellulose biosynthesis. Its function is as follows. Catalytic subunit of cellulose synthase terminal complexes ('rosettes'), required for beta-1,4-glucan microfibril crystallization, a major mechanism of the cell wall formation. This chain is Cellulose synthase A catalytic subunit 5 [UDP-forming], found in Arabidopsis thaliana (Mouse-ear cress).